The following is a 324-amino-acid chain: Elongation factor Ts, mitochondrial (324 aa).

The transit peptide at 1–44 (MSLLRSLRFFPVACTGRSARAVLLQPSQPWLTFHAGPSLSSAAS) directs the protein to the mitochondrion. N6-succinyllysine is present on residues lysine 75, lysine 132, and lysine 191. At serine 269 the chain carries Phosphoserine.

Belongs to the EF-Ts family.

Its subcellular location is the mitochondrion. Functionally, associates with the EF-Tu.GDP complex and induces the exchange of GDP to GTP. It remains bound to the aminoacyl-tRNA.EF-Tu.GTP complex up to the GTP hydrolysis stage on the ribosome. In Mus musculus (Mouse), this protein is Elongation factor Ts, mitochondrial (Tsfm).